The sequence spans 330 residues: Protein ANTHESIS POMOTING FACTOR 1 (330 aa).

WD repeat units lie at residues 22–61, 112–151, 153–191, 198–237, 242–281, and 284–323; these read DFGG…QLKI, GHKD…CQGI, HLRG…KGPF, GDTA…KKCG, PSQG…EVAR, and NNIG…APAD.

Belongs to the WD repeat SWD2 family. In terms of tissue distribution, expressed in the shoot apical meristem (SAM), embryos, seedlings, cotyledons, leaves primordia, young leaves and roots.

It is found in the nucleus. In terms of biological role, component of a chromatin regulatory complex involved in regulating chromatin structure in the nucleus. Promotes flowering under long days (LD) via the regulation of bolting. This chain is Protein ANTHESIS POMOTING FACTOR 1, found in Arabidopsis thaliana (Mouse-ear cress).